A 377-amino-acid chain; its full sequence is Chaperone protein DnaJ (377 aa).

Residues 5–70 (DYYQVLGVSR…KKRSAYDQLG (66 aa)) form the J domain. The segment at 138–216 (GVTKIISFKT…CYGEGRYINT (79 aa)) adopts a CR-type zinc-finger fold. 8 residues coordinate Zn(2+): cysteine 151, cysteine 154, cysteine 168, cysteine 171, cysteine 190, cysteine 193, cysteine 204, and cysteine 207. CXXCXGXG motif repeat units lie at residues 151–158 (CDACAGKG), 168–175 (CPTCRGSG), 190–197 (CQTCRGAG), and 204–211 (CTKCYGEG).

Belongs to the DnaJ family. In terms of assembly, homodimer. It depends on Zn(2+) as a cofactor.

The protein resides in the cytoplasm. In terms of biological role, participates actively in the response to hyperosmotic and heat shock by preventing the aggregation of stress-denatured proteins and by disaggregating proteins, also in an autonomous, DnaK-independent fashion. Unfolded proteins bind initially to DnaJ; upon interaction with the DnaJ-bound protein, DnaK hydrolyzes its bound ATP, resulting in the formation of a stable complex. GrpE releases ADP from DnaK; ATP binding to DnaK triggers the release of the substrate protein, thus completing the reaction cycle. Several rounds of ATP-dependent interactions between DnaJ, DnaK and GrpE are required for fully efficient folding. Also involved, together with DnaK and GrpE, in the DNA replication of plasmids through activation of initiation proteins. The polypeptide is Chaperone protein DnaJ (Orientia tsutsugamushi (strain Boryong) (Rickettsia tsutsugamushi)).